Here is a 428-residue protein sequence, read N- to C-terminus: Histidine--tRNA ligase (428 aa).

This sequence belongs to the class-II aminoacyl-tRNA synthetase family.

The protein resides in the cytoplasm. The enzyme catalyses tRNA(His) + L-histidine + ATP = L-histidyl-tRNA(His) + AMP + diphosphate + H(+). The protein is Histidine--tRNA ligase of Korarchaeum cryptofilum (strain OPF8).